A 59-amino-acid polypeptide reads, in one-letter code: Toxin TxpA (59 aa).

A helical transmembrane segment spans residues 7-27; that stretch reads LMVMIGFANLIGGIMTWVISL.

The protein resides in the cell membrane. Functionally, toxic component of a type I toxin-antitoxin (TA) system. Overexpression of txpA causes cell lysis; the TxpA protein has been suggested to act on the cell membrane or might possibly block cell wall synthesis. Overexpression in E.coli is not toxic. This chain is Toxin TxpA, found in Bacillus subtilis (strain 168).